Here is a 204-residue protein sequence, read N- to C-terminus: Proteasome subunit beta type-3 (204 aa).

Belongs to the peptidase T1B family. The 26S proteasome consists of a 20S proteasome core and two 19S regulatory subunits. The 20S proteasome core is composed of 28 subunits that are arranged in four stacked rings, resulting in a barrel-shaped structure. The two end rings are each formed by seven alpha subunits, and the two central rings are each formed by seven beta subunits. The catalytic chamber with the active sites is on the inside of the barrel.

It is found in the cytoplasm. The protein localises to the nucleus. Functionally, non-catalytic component of the proteasome, a multicatalytic proteinase complex which is characterized by its ability to cleave peptides with Arg, Phe, Tyr, Leu, and Glu adjacent to the leaving group at neutral or slightly basic pH. The proteasome has an ATP-dependent proteolytic activity. This Oryza sativa subsp. japonica (Rice) protein is Proteasome subunit beta type-3 (PBC1).